The following is a 125-amino-acid chain: Large ribosomal subunit protein bL12 (125 aa).

This sequence belongs to the bacterial ribosomal protein bL12 family. Homodimer. Part of the ribosomal stalk of the 50S ribosomal subunit. Forms a multimeric L10(L12)X complex, where L10 forms an elongated spine to which 2 to 4 L12 dimers bind in a sequential fashion. Binds GTP-bound translation factors.

Functionally, forms part of the ribosomal stalk which helps the ribosome interact with GTP-bound translation factors. Is thus essential for accurate translation. The sequence is that of Large ribosomal subunit protein bL12 from Thermoanaerobacter pseudethanolicus (strain ATCC 33223 / 39E) (Clostridium thermohydrosulfuricum).